The following is a 1293-amino-acid chain: MLDVNFFDELRIGLATAEDIRTWSHGEVKKPETINYRTLKPEKDGLFCEKIFGPTRDWECYCGKYKRVRFKGIICERCGVEVTRAKVRRERMGHIELAAPVTHIWYFKGVPSRLGYLLDLAPKDLEKVIYFAAYMITSVDDEARQRDFSSLEAQIEVEKREVENRRDSDVETRAKTLEQDLAELEAEGAKSDVRRKVRESAEREMAQIRRRADAEIDRLATIWDRFRTLKVQDLEGDEVLYRAMRERFGLYFEGGMGAAALQKRLQSFDLEAEAESLRETIATGKGQRKTRALKRLKVVSAFLTTRNSPEGMVLDCVPVIPPDLRPMVQLDGGRFATSDLNDLYRRVINRNNRLKRLLDLGAPEIIVNNEKRMLQEAVDALFDNGRRGRPVTGPGNRPLKSLSDMLKGKQGRFRQNLLGKRVDYSGRSVIVVGPQLKLHQCGLPKQMALELFKPFVMKRLVDLSHAQNIKSAKRMVERARPVVWDVLSEVITEHPVLLNRAPTLHRLGIQAFEPQLVEGKAIQIHPLVCTAFNADFDGDQMAVHVPLSAEAQAEARILMLSSNNILKPADGRPVTMPTQDMIIGLYHLTADRDDVAGEGRQFSSLAEAIMAFDAKQLNLNAKVRIRLSGVVPTSAMALPEDWQQGDDLDVETTLGRALFNETLPVDYEYVNVVVDKKQLSAIVNDLAERYPKVQVAATLDALKEAGFHWATRSGTTVSIADVVTPPNKQAILETYEAKAEKVQQQYERGLITDDERRQELIEIWTQATNDVAKDLEAAMPTHNTIHRMVSSGARGNWMQMRQLAGMRGLMANPKGEIIPRPVKASFREGLTVGEFFITTHGARKGLADTALRTADSGYLTRRLVDVSQDVIVREDDCGTFRGLSMPIAEKNSDGSLRRHDDVETSVYARTLATDVVVDGEVVLPAGSDLGDVVIDALVERGVESLKVRSVLTCESRVGTCARCYGRSLASGKLVDIGEAVGIVAAQSIGEPGTQLTMRTFHTGGAASESGDITHGLPRVVELFEARTPKGNAPISEVAGRTRIEETDKGRKIVVTPDDGAEEVEYPVTRRQRLLVEDGTHVEVGQKLVQGAVDPKQVLRILGPRRVQMHLVDEVQEVYRSQGVSIHDKHIEVIVRQMLKRVTIIEQNGSELLPGELVERARFEEENRRVMAEGGQPSSGRPELMGITKASLATDSWLSAASFQETTRVLTNAAMEGKSDPLLGLKENVIIGKLIPAGTGLPRYRNVRVEPTEEAKAQMYSVPGYDDVDYAQFGVGSGQAVPLEEFDYGSSDYR.

Residues C60, C62, C75, and C78 each coordinate Zn(2+). The Mg(2+) site is built by D535, D537, and D539. Residues C877, C953, C960, and C963 each coordinate Zn(2+).

The protein belongs to the RNA polymerase beta' chain family. As to quaternary structure, the RNAP catalytic core consists of 2 alpha, 1 beta, 1 beta' and 1 omega subunit. When a sigma factor is associated with the core the holoenzyme is formed, which can initiate transcription. It depends on Mg(2+) as a cofactor. Zn(2+) is required as a cofactor.

It carries out the reaction RNA(n) + a ribonucleoside 5'-triphosphate = RNA(n+1) + diphosphate. Its function is as follows. DNA-dependent RNA polymerase catalyzes the transcription of DNA into RNA using the four ribonucleoside triphosphates as substrates. The sequence is that of DNA-directed RNA polymerase subunit beta' from Kineococcus radiotolerans (strain ATCC BAA-149 / DSM 14245 / SRS30216).